The following is a 168-amino-acid chain: S-ribosylhomocysteine lyase (168 aa).

3 residues coordinate Fe cation: histidine 54, histidine 58, and cysteine 128.

Belongs to the LuxS family. As to quaternary structure, homodimer. Requires Fe cation as cofactor.

The enzyme catalyses S-(5-deoxy-D-ribos-5-yl)-L-homocysteine = (S)-4,5-dihydroxypentane-2,3-dione + L-homocysteine. Functionally, involved in the synthesis of autoinducer 2 (AI-2) which is secreted by bacteria and is used to communicate both the cell density and the metabolic potential of the environment. The regulation of gene expression in response to changes in cell density is called quorum sensing. Catalyzes the transformation of S-ribosylhomocysteine (RHC) to homocysteine (HC) and 4,5-dihydroxy-2,3-pentadione (DPD). The protein is S-ribosylhomocysteine lyase of Histophilus somni (strain 129Pt) (Haemophilus somnus).